Consider the following 451-residue polypeptide: Chromosomal replication initiator protein DnaA (451 aa).

The domain I, interacts with DnaA modulators stretch occupies residues 1-101 (MTENETIFWN…TSNHIFSRQT (101 aa)). The segment at 101–110 (TINSLPAITS) is domain II. A domain III, AAA+ region region spans residues 111–329 (DLNPKYSFDN…GALKDISLVA (219 aa)). ATP-binding residues include Gly-155, Gly-157, Lys-158, and Thr-159. Positions 330–451 (NFKEIDKITV…EIETIKNKIK (122 aa)) are domain IV, binds dsDNA.

This sequence belongs to the DnaA family. In terms of assembly, oligomerizes as a right-handed, spiral filament on DNA at oriC.

The protein resides in the cytoplasm. Plays an essential role in the initiation and regulation of chromosomal replication. ATP-DnaA binds to the origin of replication (oriC) to initiate formation of the DNA replication initiation complex once per cell cycle. Binds the DnaA box (a 9 base pair repeat at the origin) and separates the double-stranded (ds)DNA. Forms a right-handed helical filament on oriC DNA; dsDNA binds to the exterior of the filament while single-stranded (ss)DNA is stabiized in the filament's interior. The ATP-DnaA-oriC complex binds and stabilizes one strand of the AT-rich DNA unwinding element (DUE), permitting loading of DNA polymerase. After initiation quickly degrades to an ADP-DnaA complex that is not apt for DNA replication. Binds acidic phospholipids. This chain is Chromosomal replication initiator protein DnaA, found in Streptococcus uberis (strain ATCC BAA-854 / 0140J).